Consider the following 279-residue polypeptide: Methyltransferase trt5 (279 aa).

S-adenosyl-L-methionine contacts are provided by residues 124–125 (DI) and 152–153 (DV).

Belongs to the class I-like SAM-binding methyltransferase superfamily. In terms of assembly, homodimer.

Its pathway is secondary metabolite biosynthesis; terpenoid biosynthesis. Functionally, methyltransferase; part of the gene cluster that mediates the biosynthesis of terretonin, a fungal meroterpenoid that acts as a mycotoxin. The first step of the pathway is the synthesis of 3,5-dimethylorsellinic acid (DMOA) by the polyketide synthase trt4. DMOA is then prenylated into farnesyl-DMOA by the polyprenyl transferase trt2. Methylation by the methyltransferase trt5 then leads to farnesyl-DMOA methyl ester which is further subject to epoxidation by the FAD-dependent monooxygenase trt8 to yield epoxyfarnesyl-DMOA methyl ester. Cyclization of epoxyfarnesyl-DMOA methyl ester by the terpene cyclase trt1 leads to a tetracycle intermediate which is in turn converted to preterretonin. Dehydrogenase trt9 comes next to transform preterretonin to preterrenoid. The FAD-dependent monooxygenase trt3 is then required for the C-hydroxylation at C16 of preterrenoid to yield terrenoid. The cytochrome P450 trt6 catalyzes three successive oxidations to transform terrenoid into an unstable intermediate, which then undergoes the D-ring expansion and unusual rearrangement of the methoxy group to afford the core skeleton of terretonin. Trt14 catalyzes the D-ring expansion of terretonin involving intramolecular methoxy rearrangement as well as the hydrolysis of the expanded D-ring and the methyl ester moiety. Finally, the nonheme iron-dependent dioxygenase trt7 accomplishes the last two oxidation reactions steps to complete the biosynthesis of terretonin. Terretonin C is produced via spontaneous decarboxylation of the terretonin precursor. Another shunt product of the terretonin biosynthesis is dihydrofarnesyl-DMOA, derived from epoxyfarnesyl-DMOA through hydrolysis of the epoxide. In Aspergillus terreus (strain NIH 2624 / FGSC A1156), this protein is Methyltransferase trt5.